The following is a 144-amino-acid chain: Snaclec 6 (144 aa).

Residues Met-1–Ala-23 form the signal peptide. 3 disulfide bridges follow: Cys-25–Cys-36, Cys-53–Cys-142, and Cys-119–Cys-134. One can recognise a C-type lectin domain in the interval His-32–Lys-143.

Belongs to the snaclec family. As to quaternary structure, heterodimer; disulfide-linked.

It is found in the secreted. In terms of biological role, interferes with one step of hemostasis (modulation of platelet aggregation, or coagulation cascade, for example). The polypeptide is Snaclec 6 (Daboia siamensis (Eastern Russel's viper)).